Reading from the N-terminus, the 374-residue chain is Isopentenyl-diphosphate delta-isomerase (374 aa).

Residue 13–14 (RK) participates in substrate binding. FMN-binding positions include 71–73 (GMT), S104, and N132. 104-106 (SQR) lines the substrate pocket. A substrate-binding site is contributed by Q171. E172 serves as a coordination point for Mg(2+). Residues K203, T233, 282–284 (GMR), and 303–304 (AL) each bind FMN.

The protein belongs to the IPP isomerase type 2 family. Homooctamer. Dimer of tetramers. The cofactor is FMN. NADPH serves as cofactor. It depends on Mg(2+) as a cofactor.

Its subcellular location is the cytoplasm. It catalyses the reaction isopentenyl diphosphate = dimethylallyl diphosphate. Its function is as follows. Involved in the biosynthesis of isoprenoids. Catalyzes the 1,3-allylic rearrangement of the homoallylic substrate isopentenyl (IPP) to its allylic isomer, dimethylallyl diphosphate (DMAPP). The protein is Isopentenyl-diphosphate delta-isomerase of Thermococcus kodakarensis (strain ATCC BAA-918 / JCM 12380 / KOD1) (Pyrococcus kodakaraensis (strain KOD1)).